We begin with the raw amino-acid sequence, 135 residues long: Small ribosomal subunit protein eS6 (135 aa).

Belongs to the eukaryotic ribosomal protein eS6 family.

The sequence is that of Small ribosomal subunit protein eS6 from Halorubrum lacusprofundi (strain ATCC 49239 / DSM 5036 / JCM 8891 / ACAM 34).